A 621-amino-acid chain; its full sequence is MQANQWQSVQNRTFTKWFNTKLSSRDLPSVFDLRKDLSDGILLIQLLEIIGDENLGRYNRNPRMRVHRLENVNKALEYIKSKGMPLTNIGPADIVDGNLKLILGLIWTLILRFTIADINEEGLTAKEGLLLWCQRKTANYHPEVDVQDFTRSWTNGLAFCALIHQHRPDLLDYNKLDKKNHRANMQLAFDIAQKSIGIPRLIEVEDVCDVDRPDERSIMTYVAEYFHAFSTLDKVETAARRVERFTEVLMSTHDMKIDYESRMKRLLGSIARMQEYWHTVQFENNYTDVKSHSNNFAKFKATEKREWVKEKIDLESLLGTIQTNLKTYQLRKYEPPAGLKIVDLERQWKDFLSEEANQSKLINTHMREIKESMRIAFADRANSFSKMLSTISNEITNLQGDWRDQLDHVEFLQEHLGPLEVELASVKVLYDNCFQAGIEENDYTMFSYEDLEHEFGITANIIANKIKYLENELLEREKRTLSKQELDGITKVFRHFEKKKSNMLNEVEFYAALASLGLVYDTEEGTALFHRAANSEEGVTYERFTEIVMEELEDRDSARQVLYAFCDVADGKSYVTSDDLLRSQVRPNIVKFLECNMNKHSEGLDYLTWIKQLLAEDKEIV.

Calponin-homology (CH) domains are found at residues 8 to 114 and 123 to 230; these read SVQN…LRFT and LTAK…HAFS. The tract at residues 86–110 is actin-binding; that stretch reads LTNIGPADIVDGNLKLILGLIWTLI. EF-hand domains follow at residues 388 to 419, 487 to 549, and 550 to 618; these read LSTI…LGPL, DGIT…EIVM, and EELE…AEDK.

It belongs to the alpha-actinin family.

The protein resides in the cytoplasm. Its subcellular location is the cytoskeleton. Binds to actin and is involved in actin-ring formation and organization. Plays a role in cytokinesis and is involved in septation. The sequence is that of Alpha-actinin-like protein 1 (ain1) from Schizosaccharomyces pombe (strain 972 / ATCC 24843) (Fission yeast).